A 384-amino-acid polypeptide reads, in one-letter code: Galactokinase (384 aa).

Residue 34–37 (EHTD) coordinates substrate. 123–129 (SSGLSSS) contributes to the ATP binding site. Residues serine 129 and glutamate 161 each contribute to the Mg(2+) site. The active-site Proton acceptor is the aspartate 173. Tyrosine 222 is a substrate binding site.

The protein belongs to the GHMP kinase family. GalK subfamily.

The protein localises to the cytoplasm. The enzyme catalyses alpha-D-galactose + ATP = alpha-D-galactose 1-phosphate + ADP + H(+). The protein operates within carbohydrate metabolism; galactose metabolism. Its function is as follows. Catalyzes the transfer of the gamma-phosphate of ATP to D-galactose to form alpha-D-galactose-1-phosphate (Gal-1-P). This Haemophilus influenzae (strain PittGG) protein is Galactokinase.